Here is an 82-residue protein sequence, read N- to C-terminus: uncharacterized protein (82 aa).

The signal sequence occupies residues 1-19 (MKNLLKILLIIAFANPVFA).

This is an uncharacterized protein from Rickettsia prowazekii (strain Madrid E).